An 831-amino-acid chain; its full sequence is MADDGMLLNFSIPETGILSRPSLKGGNWRDRAAAKKAAQNWHTKASARLTGEKVDKVAKKTVENATDVNRTQLGQRTRRASKSPEVHEDIDRPAKRARVSGDFRPKSNEKSAAEAGDYRPQINPGATQKPSERQSAPKGAKGGKQVISSLFTYNPTSTTKTQAPEKRHDEEPIEPSNAPLSSELDTFTSLGISTTLAAHLLKKMDLKAPTAIQKAAITQLVKDDSDAFIQAETGSGKTLAYLLPIVQRLMELSANMKKHKDDDAVQRNSGLFAIIMAPTRELSKQIALVLEKLLGCAHWLVATTVIGGEKKKSEKARLRKGINILVATPGRLADHLEHTEALDVSNVRWLVLDEGDRLMELGFEQEIQKIVGALNLRMRGNKTRIPGLPDKRTTVLCSATMKMDVERLGQISLKDAVHLRADPTEREQEGDEPQDERSYAPAQLKQSYAVVAPKLRLVSLIAYLKRAFTRKGSVMKAIVFVSCADSVDFHFDILTSNLEEKNEKAEGTKDDTEEKADDDEPKKSTKKPKAIPQADPTKLSVTHAESPVLSPKSHAVTAYRLHGSLQQSLRTSTLAHFTKNNDAAVLIATDVASRGLDLPNVDLVVEFDPAFAREDHLHRIGRTARAGRDGRACIFLMPGPEEGYVDILKTDRKDNEAGITITRQDADDILTRGLVTSGIATKNAYMDIAQDLQLNVERWALASPARLESARRAFQSHIRAYATHVADERKYFDIKSLHLGHLAKAFALRERPSGMKAPGLRTGAGRNDRTPAKIRGANAAKIGSAPAAKKAVDLDIPDAKDTEEAAKMRKAVRAREKFMRHAGMADEFNLG.

The segment covering 65–75 has biased composition (polar residues); the sequence is ATDVNRTQLGQ. A disordered region spans residues 65 to 180; it reads ATDVNRTQLG…EPIEPSNAPL (116 aa). Basic and acidic residues predominate over residues 82-112; it reads KSPEVHEDIDRPAKRARVSGDFRPKSNEKSA. Positions 146-162 are enriched in polar residues; the sequence is VISSLFTYNPTSTTKTQ. Residues 185–214 carry the Q motif motif; it reads DTFTSLGISTTLAAHLLKKMDLKAPTAIQK. The region spanning 218 to 419 is the Helicase ATP-binding domain; the sequence is TQLVKDDSDA…QISLKDAVHL (202 aa). 231–238 is a binding site for ATP; it reads AETGSGKT. The DEAD box motif lies at 353–356; the sequence is DEGD. Disordered stretches follow at residues 419 to 441 and 501 to 543; these read LRAD…SYAP and KNEK…SVTH. The 215-residue stretch at 456–670 folds into the Helicase C-terminal domain; that stretch reads RLVSLIAYLK…ITRQDADDIL (215 aa). A compositionally biased stretch (basic and acidic residues) spans 501-512; sequence KNEKAEGTKDDT.

It belongs to the DEAD box helicase family. DDX31/DBP7 subfamily.

The protein resides in the nucleus. Its subcellular location is the nucleolus. It carries out the reaction ATP + H2O = ADP + phosphate + H(+). In terms of biological role, ATP-binding RNA helicase involved in the biogenesis of 60S ribosomal subunits and is required for the normal formation of 25S and 5.8S rRNAs. The sequence is that of ATP-dependent RNA helicase DBP7 (DBP7) from Phaeosphaeria nodorum (strain SN15 / ATCC MYA-4574 / FGSC 10173) (Glume blotch fungus).